The following is a 233-amino-acid chain: Large ribosomal subunit protein uL1 (233 aa).

The protein belongs to the universal ribosomal protein uL1 family. As to quaternary structure, part of the 50S ribosomal subunit.

Its function is as follows. Binds directly to 23S rRNA. The L1 stalk is quite mobile in the ribosome, and is involved in E site tRNA release. Protein L1 is also a translational repressor protein, it controls the translation of the L11 operon by binding to its mRNA. This Laribacter hongkongensis (strain HLHK9) protein is Large ribosomal subunit protein uL1.